A 180-amino-acid chain; its full sequence is Inner membrane-spanning protein YciB (180 aa).

Helical transmembrane passes span 25-45 (QNATLYMLITAIICVTICYFV), 54-74 (IISVSVLLVSGIITLISGNSI), 76-96 (IKIKPTILYVIFGIIFLMSGI), 118-138 (ITLSYRAAAFFFFMAVVNEIV), and 150-170 (FKVFGVIPITFIFILLQLPLL).

It belongs to the YciB family.

It is found in the cell inner membrane. In terms of biological role, plays a role in cell envelope biogenesis, maintenance of cell envelope integrity and membrane homeostasis. The sequence is that of Inner membrane-spanning protein YciB from Rickettsia canadensis (strain McKiel).